Reading from the N-terminus, the 692-residue chain is Methionine--tRNA ligase (692 aa).

The short motif at 12–22 (PYANGSFHIGH) is the 'HIGH' region element. Residues Cys-143, Cys-146, Cys-156, and Cys-159 each coordinate Zn(2+). Positions 341-345 (KMSKS) match the 'KMSKS' region motif. Lys-344 is an ATP binding site. Residues 586-692 (DFAKIDLRIA…PGAQPGMRVR (107 aa)) enclose the tRNA-binding domain.

Belongs to the class-I aminoacyl-tRNA synthetase family. MetG type 1 subfamily. As to quaternary structure, homodimer. It depends on Zn(2+) as a cofactor.

Its subcellular location is the cytoplasm. It carries out the reaction tRNA(Met) + L-methionine + ATP = L-methionyl-tRNA(Met) + AMP + diphosphate. Its function is as follows. Is required not only for elongation of protein synthesis but also for the initiation of all mRNA translation through initiator tRNA(fMet) aminoacylation. This is Methionine--tRNA ligase from Bordetella parapertussis (strain 12822 / ATCC BAA-587 / NCTC 13253).